Here is a 1004-residue protein sequence, read N- to C-terminus: Outer cell wall protein (1004 aa).

The first 24 residues, 1 to 24 (MNKKVVLSVLSTTLVASVAASAFA), serve as a signal peptide directing secretion.

As to quaternary structure, the outer cell wall layer is composed of subunits of the outer cell wall protein. These proteins form a hexagonal array with a lattice constant of 14.5 nm in the outer cell wall layers.

The protein localises to the secreted. It is found in the cell wall. The protein resides in the S-layer. The outer wall protein binds to the middle cell wall protein. This Brevibacillus brevis (strain 47 / JCM 6285 / NBRC 100599) protein is Outer cell wall protein.